We begin with the raw amino-acid sequence, 668 residues long: Threonine--tRNA ligase (668 aa).

Residues 1 to 61 (MSDLKIALTH…ADGDQVEPVA (61 aa)) enclose the TGS domain. Residues 265 to 564 (DHRKLGRDLD…LVEHYAGAFP (300 aa)) form a catalytic region. Cys358, His409, and His541 together coordinate Zn(2+).

It belongs to the class-II aminoacyl-tRNA synthetase family. As to quaternary structure, homodimer. It depends on Zn(2+) as a cofactor.

The protein localises to the cytoplasm. It catalyses the reaction tRNA(Thr) + L-threonine + ATP = L-threonyl-tRNA(Thr) + AMP + diphosphate + H(+). Functionally, catalyzes the attachment of threonine to tRNA(Thr) in a two-step reaction: L-threonine is first activated by ATP to form Thr-AMP and then transferred to the acceptor end of tRNA(Thr). Also edits incorrectly charged L-seryl-tRNA(Thr). This chain is Threonine--tRNA ligase, found in Nocardioides sp. (strain ATCC BAA-499 / JS614).